Consider the following 470-residue polypeptide: Solvent efflux pump outer membrane protein SrpC (470 aa).

An N-terminal signal peptide occupies residues 1-16 (MKFKSLPMFALLMLGG). The N-palmitoyl cysteine moiety is linked to residue C17. C17 is lipidated: S-diacylglycerol cysteine. A disordered region spans residues 104–123 (LDGQASGNRTRLPDDLSPTG).

Belongs to the outer membrane factor (OMF) (TC 1.B.17) family.

It is found in the cell outer membrane. Functionally, the outer membrane component of an organic solvent efflux pump. Involved in export of a number of low log POW compounds including hexane (log POW 3.5), toluene (log POW 2.5) and dimethylphthalate (log POW 2.3). The solvent resistance phenotype has been postulated to depend on the operon expression level. The polypeptide is Solvent efflux pump outer membrane protein SrpC (srpC) (Pseudomonas putida (Arthrobacter siderocapsulatus)).